The chain runs to 33 residues: Photosystem II reaction center protein Psb30 (33 aa).

Residues 5-25 (LIGQLVTVALVVGAGPIIIGA) traverse the membrane as a helical segment.

It belongs to the Psb30/Ycf12 family. As to quaternary structure, PSII is composed of 1 copy each of membrane proteins PsbA, PsbB, PsbC, PsbD, PsbE, PsbF, PsbH, PsbI, PsbJ, PsbK, PsbL, PsbM, PsbT, PsbX, PsbY, PsbZ, Psb30/Ycf12, peripheral proteins of the oxygen-evolving complex and a large number of cofactors. It forms dimeric complexes.

It localises to the plastid. It is found in the chloroplast thylakoid membrane. In terms of biological role, a core subunit of photosystem II (PSII), probably helps stabilize the reaction center. The protein is Photosystem II reaction center protein Psb30 of Ostreococcus tauri.